A 373-amino-acid polypeptide reads, in one-letter code: Pollen allergen KBG 31 (373 aa).

The N-terminal stretch at 1 to 28 is a signal peptide; that stretch reads MDKANGAYKTALKAASAVAPAEKFPVFQ.

This sequence belongs to the Poa p IX/Phl p VI allergen family. Pollen.

The sequence is that of Pollen allergen KBG 31 from Poa pratensis (Kentucky bluegrass).